Here is a 474-residue protein sequence, read N- to C-terminus: SHC-transforming protein 3 (474 aa).

Residues 1–27 (MSATRKSRAGDEPLPRPPRGAPHTSDQ) are disordered. One can recognise a PID domain in the interval 29–214 (LGPGVTYVVK…LDEPWTEEEG (186 aa)). Residues 215–378 (DGPDHPYYNS…RMLEELNAEP (164 aa)) are CH1. Position 282 is a phosphoserine (serine 282). The disordered stretch occupies residues 308–328 (QPVPPQVWPAATSSTESSPRK). One can recognise an SH2 domain in the interval 379–470 (WYQGEMSRKE…GSELCLQQPV (92 aa)).

Interacts with the Trk receptors in a phosphotyrosine-dependent manner. Once activated, binds to GRB2. Interacts with activated EGF receptors. Post-translationally, tyrosine phosphorylated. As to expression, predominantly expressed in the adult brain.

Functionally, signaling adapter that couples activated growth factor receptors to signaling pathway in neurons. Involved in the signal transduction pathways of neurotrophin-activated Trk receptors in cortical neurons. This is SHC-transforming protein 3 (Shc3) from Mus musculus (Mouse).